Reading from the N-terminus, the 180-residue chain is Sperm protein associated with the nucleus on the X chromosome N2 (180 aa).

Disordered regions lie at residues 1–46 (MEQP…KTKT) and 64–180 (NSNQ…GGED). Basic and acidic residues predominate over residues 10-26 (GEKRKSPCESNNKKNDE). Over residues 82–169 (QEEEDEGLDS…SSQEDEDLDS (88 aa)) the composition is skewed to acidic residues. A compositionally biased stretch (low complexity) spans 170–180 (SEGSSQEGGED).

It belongs to the SPAN-X family.

The protein is Sperm protein associated with the nucleus on the X chromosome N2 (SPANXN2) of Homo sapiens (Human).